The primary structure comprises 458 residues: Argininosuccinate lyase (458 aa).

It belongs to the lyase 1 family. Argininosuccinate lyase subfamily.

It is found in the cytoplasm. The catalysed reaction is 2-(N(omega)-L-arginino)succinate = fumarate + L-arginine. It participates in amino-acid biosynthesis; L-arginine biosynthesis; L-arginine from L-ornithine and carbamoyl phosphate: step 3/3. The chain is Argininosuccinate lyase from Bacillus velezensis (strain DSM 23117 / BGSC 10A6 / LMG 26770 / FZB42) (Bacillus amyloliquefaciens subsp. plantarum).